Reading from the N-terminus, the 616-residue chain is ATP-dependent RNA helicase VAD1 (616 aa).

Positions 1-35 are disordered; sequence MASSSTLANDDWKQGLAAPPKDLRPQTEDVTATQG. The Q motif motif lies at 36–64; that stretch reads SRFEDFGLRRELLMGIYTAGFERPSPIQE. The Helicase ATP-binding domain occupies 67-238; that stretch reads IPMALTGRDI…DQHMVQPYEI (172 aa). Residue 80-87 coordinates ATP; it reads AKNGTGKT. Residues 186–189 carry the DEAD box motif; the sequence is DEAD. The Helicase C-terminal domain maps to 248–408; that stretch reads GVTQYYAYVE…PIPAVIDPVL (161 aa). The interval 416–616 is disordered; that stretch reads EEERESPPPK…GASQSQQAQA (201 aa). Low complexity-rich tracts occupy residues 427 to 441, 458 to 500, and 508 to 523; these read AAIA…PQQR, PAAA…NSSP, and YPQQ…AQMQ. A compositionally biased stretch (polar residues) spans 529 to 545; sequence PATQPQASAQIPVQGQT. Composition is skewed to low complexity over residues 550-579 and 606-616; these read PRAQ…PNTG and AGASQSQQAQA.

Belongs to the DEAD box helicase family. DDX6/DHH1 subfamily.

Its subcellular location is the cytoplasm. The protein localises to the P-body. The catalysed reaction is ATP + H2O = ADP + phosphate + H(+). Its function is as follows. ATP-dependent RNA helicase involved in mRNA turnover, and more specifically in mRNA decapping. Is involved in G1/S DNA-damage checkpoint recovery, probably through the regulation of the translational status of a subset of mRNAs. May also have a role in translation and mRNA nuclear export. Blocks autophagy in nutrient-rich conditions by, at least partly, binding and repressing the expression of a set of ATG genes, including ATG3, ATG7, ATG8, ATG19, ATG20 and ATG22. VAD1-mediated repression of autophagy is regulated by TOR-dependent phosphorylation of the decapping enzyme DCP2. Regulates multiple virulence-associated genes. Repression of autophagy by VAD1 also regulates the pathogenesis. This is ATP-dependent RNA helicase VAD1 from Cryptococcus neoformans var. grubii serotype A (strain H99 / ATCC 208821 / CBS 10515 / FGSC 9487) (Filobasidiella neoformans var. grubii).